We begin with the raw amino-acid sequence, 702 residues long: Methionine--tRNA ligase (702 aa).

Residues 14–24 (PYANGPVHLGH) carry the 'HIGH' region motif. Residues cysteine 146, cysteine 149, cysteine 159, and cysteine 162 each contribute to the Zn(2+) site. The 'KMSKS' region motif lies at 344–348 (KFSKS). Position 347 (lysine 347) interacts with ATP. The region spanning 601–702 (DFQKVDLRAA…GEKINGSSVQ (102 aa)) is the tRNA-binding domain.

Belongs to the class-I aminoacyl-tRNA synthetase family. MetG type 1 subfamily. As to quaternary structure, homodimer. Zn(2+) is required as a cofactor.

The protein resides in the cytoplasm. The enzyme catalyses tRNA(Met) + L-methionine + ATP = L-methionyl-tRNA(Met) + AMP + diphosphate. Its function is as follows. Is required not only for elongation of protein synthesis but also for the initiation of all mRNA translation through initiator tRNA(fMet) aminoacylation. This chain is Methionine--tRNA ligase, found in Chlorobium phaeovibrioides (strain DSM 265 / 1930) (Prosthecochloris vibrioformis (strain DSM 265)).